We begin with the raw amino-acid sequence, 459 residues long: MQIQFHLYNTLSRTKEVFNPQDQTKVKMYVCGPTVYDNPHIGNSRSVVVYDLLYRIVIKIFGEQSVKYVRNITDVDDKIIDRAELLSITINELTDKVTQEFHTNMAYLGCLLPSIEPKATEHIDVMIEIIERLIAKDHAYIADNHVYFDVLSAPNYTELSNRNLEEMFEGVRIENSKTKKHPQDFVLWKPAKPNESANMNFKSPWGFGRPGWHIECSAMSYKYLGENFDIHGGGADLIFPHHTNEIAQSRCAFPDSTYAKYWVHNGFLTVNGEKMSKSLGNFITVRNLMDKEISGEVVRLFLLSSHYRRPLDYNDKAIEDAKKTLDYWYRAIENINVQKIDLPHNFMQSLLDDMNTPLAVKIINDYAKGVFISKTEEEKQLNASAIITCANFIGLMNKTPHEWFNSGVDELYINELLNKRLEAKKQKNWLLADQIRNQLLEEKIILEDKPDGTTIWRKE.

Cysteine 31 contacts Zn(2+). Residues 33–43 (PTVYDNPHIGN) carry the 'HIGH' region motif. Zn(2+) contacts are provided by cysteine 216, histidine 241, and glutamate 245. The short motif at 274–278 (KMSKS) is the 'KMSKS' region element. Lysine 277 contacts ATP.

Belongs to the class-I aminoacyl-tRNA synthetase family. Monomer. The cofactor is Zn(2+).

The protein localises to the cytoplasm. It catalyses the reaction tRNA(Cys) + L-cysteine + ATP = L-cysteinyl-tRNA(Cys) + AMP + diphosphate. The sequence is that of Cysteine--tRNA ligase from Rickettsia felis (strain ATCC VR-1525 / URRWXCal2) (Rickettsia azadi).